Here is a 299-residue protein sequence, read N- to C-terminus: Protease HtpX homolog (299 aa).

2 consecutive transmembrane segments (helical) span residues 15 to 35 (MFLT…VLWQ) and 37 to 57 (GVSY…QYYF). His-140 lines the Zn(2+) pocket. Glu-141 is an active-site residue. His-144 contacts Zn(2+). A run of 2 helical transmembrane segments spans residues 158-178 (FFAT…GAFG) and 187-207 (NNIM…YFLI). Glu-215 contacts Zn(2+).

The protein belongs to the peptidase M48B family. Zn(2+) is required as a cofactor.

It is found in the cell membrane. This chain is Protease HtpX homolog, found in Moorella thermoacetica (strain ATCC 39073 / JCM 9320).